Here is a 566-residue protein sequence, read N- to C-terminus: KsdD-like steroid dehydrogenase Rv0785 (566 aa).

23–54 (DAIVVGAGLAGLVAACELADRGLRVLILDQEN) is a binding site for FAD.

The protein belongs to the FAD-dependent oxidoreductase 2 family. The cofactor is FAD.

It functions in the pathway lipid metabolism; steroid biosynthesis. Able to catalyze the elimination of the C-1 and C-2 hydrogen atoms of the A-ring from the polycyclic ring structure of 3-ketosteroids. The protein is KsdD-like steroid dehydrogenase Rv0785 of Mycobacterium tuberculosis (strain ATCC 25618 / H37Rv).